Consider the following 208-residue polypeptide: MASSLLAGERLVRALGPGGELEPELLPRKLRAELEAALGKKHTGGDSSSGPQRLVSFRLIRDLHQHLRERDSKLYLHELLEGSEIYLPEVVKPPRNPELVARLEKIKIQLANEEYKRITRNVTCQDTRHGGTLSDLGKQVRSLKALVITIFNFIVTVVAAFVCTYLGSQYIFTEMASRVLAALIVASVVGLAELYVMVRAMEGELGEL.

N-acetylalanine is present on Ala2. 2 helical membrane passes run 146 to 166 and 178 to 198; these read LVITIFNFIVTVVAAFVCTYL and RVLAALIVASVVGLAELYVMV.

Accessory component of the multisubunit proton-transporting vacuolar (V)-ATPase protein pump.

Its subcellular location is the cytoplasmic vesicle. The protein localises to the COPI-coated vesicle membrane. It localises to the endoplasmic reticulum-Golgi intermediate compartment membrane. It is found in the endoplasmic reticulum membrane. Functionally, in aerobic conditions, required for intracellular iron homeostasis, thus triggering the activity of Fe(2+) prolyl hydroxylase (PHD) enzymes, and leading to HIF1A hydroxylation and subsequent proteasomal degradation. Necessary for endolysosomal acidification and lysosomal degradation. May be involved in Golgi homeostasis. Binds 20(S)-hydroxycholesterol (20(S)-OHC). This is Vacuolar ATPase assembly protein VMA12 (VMA12) from Pongo abelii (Sumatran orangutan).